The sequence spans 2157 residues: Polyketide synthase 2 (2157 aa).

The segment at 7-244 (FIFGDQTGGF…IPIPIWAPYH (238 aa)) is N-terminal acylcarrier protein transacylase domain (SAT). The 434-residue stretch at 374–807 (DSKIAIIGMS…GGNSALLLED (434 aa)) folds into the Ketosynthase family 3 (KS3) domain. Catalysis depends on for beta-ketoacyl synthase activity residues Cys546, His681, and His723. Residues 908–1213 (GFVFSGQGAQ…ASLHRKDDGW (306 aa)) form a malonyl-CoA:ACP transacylase (MAT) domain region. The For acyl/malonyl transferase activity role is filled by Ser998. Residues 1290–1605 (TSSVQKIIRQ…RSLLNKVLPP (316 aa)) are product template (PT) domain. Residues 1294–1428 (QKIIRQTDGP…CLLRFADPTS (135 aa)) form an N-terminal hotdog fold region. The PKS/mFAS DH domain maps to 1294–1600 (QKIIRQTDGP…FLGMSRSLLN (307 aa)). His1327 serves as the catalytic Proton acceptor; for dehydratase activity. Residues 1455–1600 (TDSLLSRGIV…FLGMSRSLLN (146 aa)) are C-terminal hotdog fold. Asp1514 serves as the catalytic Proton donor; for dehydratase activity. A disordered region spans residues 1626–1652 (AASAKDTERRPLDIPTRAQRQPSSAQT). A compositionally biased stretch (polar residues) spans 1643–1652 (AQRQPSSAQT). In terms of domain architecture, Carrier 1 spans 1649–1726 (SAQTGTMGRI…ELKAFLGADQ (78 aa)). Ser1686 is modified (O-(pantetheine 4'-phosphoryl)serine). The interval 1733–1762 (ACESSNGQHTPQTSDKGSGTLAVQKTDDDT) is disordered. Polar residues predominate over residues 1735–1755 (ESSNGQHTPQTSDKGSGTLAV). A Carrier 2 domain is found at 1765-1839 (DMTLNRVCAI…SLQKALCGSE (75 aa)). At Ser1799 the chain carries O-(pantetheine 4'-phosphoryl)serine. The disordered stretch occupies residues 1840–1859 (AASNGAPEANETTPSSHRLE). The segment at 1875–2151 (ASPPHATSIL…MIEMGNLIGE (277 aa)) is thioesterase (TE) domain. Ser1981 functions as the For thioesterase activity in the catalytic mechanism.

Functionally, polyketide synthase; part of the Pks2 gene cluster that mediates the formation of infectious structures (appressoria), enabling these fungi to kill insects faster. The product of the Pks2 gene cluster is different from the one of Pks1 and has still not been identified. The polypeptide is Polyketide synthase 2 (Metarhizium robertsii (strain ARSEF 23 / ATCC MYA-3075) (Metarhizium anisopliae (strain ARSEF 23))).